Reading from the N-terminus, the 144-residue chain is Large ribosomal subunit protein uL15 (144 aa).

The tract at residues 1–51 (MKLNELKPATGSRSKRLRKGRGLSSGHGFTSGRGTKGQKAHGKTRLGFEGG) is disordered. Positions 23–35 (LSSGHGFTSGRGT) are enriched in gly residues.

Belongs to the universal ribosomal protein uL15 family. In terms of assembly, part of the 50S ribosomal subunit.

Binds to the 23S rRNA. This is Large ribosomal subunit protein uL15 from Limosilactobacillus reuteri (strain DSM 20016) (Lactobacillus reuteri).